A 126-amino-acid polypeptide reads, in one-letter code: Small ribosomal subunit protein uS11 (126 aa).

The protein belongs to the universal ribosomal protein uS11 family. Part of the 30S ribosomal subunit. Interacts with proteins S7 and S18. Binds to IF-3.

Its function is as follows. Located on the platform of the 30S subunit, it bridges several disparate RNA helices of the 16S rRNA. Forms part of the Shine-Dalgarno cleft in the 70S ribosome. In Ehrlichia chaffeensis (strain ATCC CRL-10679 / Arkansas), this protein is Small ribosomal subunit protein uS11.